The sequence spans 788 residues: MNSKIIEKLEYNRIIKQLSDLAITVPAKEQALTLMPSSNFDEVKKSIDQTRVLSNVLRVKGPMPITDFKDVRASLKRLKVKANLNGEELGNIFLILSLAKDVSQFTADLEEREIDTRPIEKTLKNLAIPEDLFKKLNQAIEYDGTVKDTASSKLMQLRHDIQSNETDIKNHMNDYISGKHTQYLSENIVTIRDGRYVLPVKQEYKNKFGGVVHDQSASGQTLFVEPQAVLVLNNRQQNLMAQERQEIHRILIELSELAGMYQKEIKNNADALTQLDFLSAKSKLAKAMKATEPVLNQDHVIKLRKARHPLIDPKKVVPNNIELGTSFDTMLITGPNTGGKTITLKTLGLLQLMAQAGLFITAEEGSQLTVFNEIYADIGDEQSIEQSLSTFSSHMDQIIKIMKDVTEDDLVLIDELGAGTDPEEGASLAIAILDDLRGAQAKIAITTHYPELKLYGYNRARTTNASMEFDLKKLAPTYRLRIGIPGQSNAFAIAHQLGMNEVVVDKARSLMNDEDSDINKMIERLTEQTKAAEQLHETLKQNVDQSITLKRQLQNGLDWYNQQVQKQLEKAQEKADEMLAKKRQKADKIINDLEEQRRAGGQVRTNKVIEAKGALNKLERENQNLAQNKVLQREKRRHDVSVGDTVKVLSYGQQGVITKKLADHEFEVQIGILKVKVTDRDVEKISTQAAPKKAERAVRSSRDLRSTRASSELDLRGQRYEEALTNLDRYIDSSLLAGLNTVTIIHGIGTGAIRNGVQQYLKRNRHVKSYSYAPANQGGTGATIVYLQ.

Gly-334–Thr-341 contributes to the ATP binding site. Residues Leu-713–Gln-788 enclose the Smr domain.

This sequence belongs to the DNA mismatch repair MutS family. MutS2 subfamily. Homodimer. Binds to stalled ribosomes, contacting rRNA.

Its function is as follows. Endonuclease that is involved in the suppression of homologous recombination and thus may have a key role in the control of bacterial genetic diversity. Functionally, acts as a ribosome collision sensor, splitting the ribosome into its 2 subunits. Detects stalled/collided 70S ribosomes which it binds and splits by an ATP-hydrolysis driven conformational change. Acts upstream of the ribosome quality control system (RQC), a ribosome-associated complex that mediates the extraction of incompletely synthesized nascent chains from stalled ribosomes and their subsequent degradation. Probably generates substrates for RQC. The sequence is that of Endonuclease MutS2 from Lactobacillus johnsonii (strain CNCM I-12250 / La1 / NCC 533).